A 487-amino-acid chain; its full sequence is MVLSQLGSSLVTALRKMTSSTVVDEEVINTLLKEIETSLLGEDVNPIFIRQMVNNIKKKINSEDIPDGIDKRKLIKDSVFEELINLVDPKTEAFKPKKGKTCVLMMVGLQGAGKTTTITKLALYYKNRGYKPAVVGADTFRAGAYEQLQMNAKRAGVPFFGIKEESDPVKVASEGVRTFRKEKNDIILVDTSGRHKQDKELFKEMQSVRDAIKPDSIIFVMDGAIGQAAFGQAKAFKDAVEVGSVIITKLDGHSNGGGALSAVAATKSPIIFIGTGEKVNEIEEFDAESFVRKLLGMGDLKGIAKLAKDFAENAEYKTMVKHLQEGTLTVRDWKEQLSNLQKMGQLGNIMQMIGLNHPMFQGGNIEKKFKVFMVILDSMTDRELDGSAKTMLNDESRIRRLARGSGRDIREVNELFEQIKLFQQCIDRLPKAMRAQLGNCNAQPNEAAMMQQMQRMLPKGVNQAQLQQLMKQMNAAGLGGTGKKGKK.

The interval 1 to 295 (MVLSQLGSSL…DAESFVRKLL (295 aa)) is G-domain. GTP contacts are provided by residues 108–115 (GLQGAGKT), 190–194 (DTSGR), and 248–251 (TKLD). The interval 296 to 487 (GMGDLKGIAK…LGGTGKKGKK (192 aa)) is M-domain.

Belongs to the GTP-binding SRP family. SRP54 subfamily. As to quaternary structure, component of a signal recognition particle (SRP) complex that consists of a 7SL RNA molecule of 300 nucleotides and six protein subunits: SRP72, SRP68, SRP54, SRP19, SRP14 and SRP9.

It localises to the cytoplasm. It is found in the endoplasmic reticulum. It carries out the reaction GTP + H2O = GDP + phosphate + H(+). Component of the signal recognition particle (SRP) complex, a ribonucleoprotein complex that mediates the cotranslational targeting of secretory and membrane proteins to the endoplasmic reticulum (ER). As part of the SRP complex, associates with the SRP receptor (SR) component SRPRA to target secretory proteins to the endoplasmic reticulum membrane. Binds to the signal sequence of presecretory proteins when they emerge from the ribosomes. Displays basal GTPase activity, and stimulates reciprocal GTPase activation of the SR subunit SRPRA. Forms a guanosine 5'-triphosphate (GTP)-dependent complex with the SR subunit SRPRA. SR compaction and GTPase mediated rearrangement of SR drive SRP-mediated cotranslational protein translocation into the ER. Requires the presence of SRP9/SRP14 and/or SRP19 to stably interact with RNA. This is Signal recognition particle subunit SRP54 from Entamoeba histolytica (strain ATCC 30459 / HM-1:IMSS / ABRM).